The primary structure comprises 472 residues: Uronate isomerase (472 aa).

Belongs to the metallo-dependent hydrolases superfamily. Uronate isomerase family.

The catalysed reaction is D-glucuronate = D-fructuronate. It carries out the reaction aldehydo-D-galacturonate = keto-D-tagaturonate. The protein operates within carbohydrate metabolism; pentose and glucuronate interconversion. The chain is Uronate isomerase from Shouchella clausii (strain KSM-K16) (Alkalihalobacillus clausii).